The chain runs to 257 residues: Imidazole glycerol phosphate synthase subunit HisF (257 aa).

Active-site residues include D11 and D130.

This sequence belongs to the HisA/HisF family. As to quaternary structure, heterodimer of HisH and HisF.

It localises to the cytoplasm. The enzyme catalyses 5-[(5-phospho-1-deoxy-D-ribulos-1-ylimino)methylamino]-1-(5-phospho-beta-D-ribosyl)imidazole-4-carboxamide + L-glutamine = D-erythro-1-(imidazol-4-yl)glycerol 3-phosphate + 5-amino-1-(5-phospho-beta-D-ribosyl)imidazole-4-carboxamide + L-glutamate + H(+). The protein operates within amino-acid biosynthesis; L-histidine biosynthesis; L-histidine from 5-phospho-alpha-D-ribose 1-diphosphate: step 5/9. In terms of biological role, IGPS catalyzes the conversion of PRFAR and glutamine to IGP, AICAR and glutamate. The HisF subunit catalyzes the cyclization activity that produces IGP and AICAR from PRFAR using the ammonia provided by the HisH subunit. In Shewanella halifaxensis (strain HAW-EB4), this protein is Imidazole glycerol phosphate synthase subunit HisF.